We begin with the raw amino-acid sequence, 285 residues long: Dermonecrotic toxin LlSicTox-alphaIII1ii (285 aa).

His12 is a catalytic residue. Residues Glu32 and Asp34 each coordinate Mg(2+). His47 (nucleophile) is an active-site residue. Residues Cys51 and Cys57 are joined by a disulfide bond. Asp91 serves as a coordination point for Mg(2+).

This sequence belongs to the arthropod phospholipase D family. Class I subfamily. The cofactor is Mg(2+). Expressed by the venom gland.

The protein resides in the secreted. It carries out the reaction an N-(acyl)-sphingosylphosphocholine = an N-(acyl)-sphingosyl-1,3-cyclic phosphate + choline. The catalysed reaction is an N-(acyl)-sphingosylphosphoethanolamine = an N-(acyl)-sphingosyl-1,3-cyclic phosphate + ethanolamine. It catalyses the reaction a 1-acyl-sn-glycero-3-phosphocholine = a 1-acyl-sn-glycero-2,3-cyclic phosphate + choline. The enzyme catalyses a 1-acyl-sn-glycero-3-phosphoethanolamine = a 1-acyl-sn-glycero-2,3-cyclic phosphate + ethanolamine. Its function is as follows. Dermonecrotic toxins cleave the phosphodiester linkage between the phosphate and headgroup of certain phospholipids (sphingolipid and lysolipid substrates), forming an alcohol (often choline) and a cyclic phosphate. This toxin acts on sphingomyelin (SM) with high activity (56.8 U/mg). It may also act on ceramide phosphoethanolamine (CPE), lysophosphatidylcholine (LPC) and lysophosphatidylethanolamine (LPE), but not on lysophosphatidylserine (LPS), and lysophosphatidylglycerol (LPG). It acts by transphosphatidylation, releasing exclusively cyclic phosphate products as second products. Induces dermonecrosis, hemolysis, increased vascular permeability, edema, inflammatory response, and platelet aggregation. Is lethal to mice. In Loxosceles laeta (South American recluse spider), this protein is Dermonecrotic toxin LlSicTox-alphaIII1ii.